The chain runs to 372 residues: Fatty acid 2-hydroxylase (372 aa).

A Cytochrome b5 heme-binding domain is found at 8-86; sequence AASFTSAEVQ…LEQYYVGELR (79 aa). Heme-binding residues include H43 and H69. 2 helical membrane-spanning segments follow: residues 168-188 and 213-233; these read VWYSVPIIWVPLVLYLSWSYY and SVFIGLFVLGMLIWTLVEYLI. Residues 219–361 enclose the Fatty acid hydroxylase domain; the sequence is FVLGMLIWTL…TKLWDYFFHT (143 aa). Residues H234, H239, H257, H260, and H261 each coordinate Zn(2+). 2 helical membrane passes run 268–288 and 290–310; these read SRLVFPPVPASVVVAFFYVFL and LILPEAVAGILFAGGLLGYVL. Residues H315, H319, H336, H339, and H340 each contribute to the Zn(2+) site.

This sequence belongs to the sterol desaturase family. SCS7 subfamily. Zn(2+) serves as cofactor. As to expression, detected in oligodendrocytes (at protein level). Detected in sciatic nerve.

The protein resides in the endoplasmic reticulum membrane. The protein localises to the microsome membrane. It carries out the reaction a 1,2-saturated fatty acid + 2 Fe(II)-[cytochrome b5] + O2 + 2 H(+) = a (R)-2-hydroxy fatty acid + 2 Fe(III)-[cytochrome b5] + H2O. The enzyme catalyses hexadecanoate + 2 Fe(II)-[cytochrome b5] + O2 + 2 H(+) = (R)-2-hydroxyhexadecanoate + 2 Fe(III)-[cytochrome b5] + H2O. The catalysed reaction is octadecanoate + 2 Fe(II)-[cytochrome b5] + O2 + 2 H(+) = (R)-2-hydroxyoctadecanoate + 2 Fe(III)-[cytochrome b5] + H2O. It catalyses the reaction docosanoate + 2 Fe(II)-[cytochrome b5] + O2 + 2 H(+) = 2-hydroxydocosanoate + 2 Fe(III)-[cytochrome b5] + H2O. It carries out the reaction tetracosanoate + 2 Fe(II)-[cytochrome b5] + O2 + 2 H(+) = (R)-2-hydroxytetracosanoate + 2 Fe(III)-[cytochrome b5] + H2O. It participates in lipid metabolism; fatty acid metabolism. It functions in the pathway sphingolipid metabolism; galactosylceramide biosynthesis. Catalyzes the hydroxylation of free fatty acids at the C-2 position to produce 2-hydroxy fatty acids, which are building blocks of sphingolipids and glycosphingolipids common in neural tissue and epidermis. FA2H is stereospecific for the production of (R)-2-hydroxy fatty acids. Plays an essential role in the synthesis of galactosphingolipids of the myelin sheath. Responsible for the synthesis of sphingolipids and glycosphingolipids involved in the formation of epidermal lamellar bodies critical for skin permeability barrier. Participates in the synthesis of glycosphingolipids and a fraction of type II wax diesters in sebaceous gland, specifically regulating hair follicle homeostasis. Involved in the synthesis of sphingolipids of plasma membrane rafts, controlling lipid raft mobility and trafficking of raft-associated proteins. In Rattus norvegicus (Rat), this protein is Fatty acid 2-hydroxylase.